The primary structure comprises 329 residues: DNA-directed RNA polymerase subunit alpha (329 aa).

The tract at residues 1–234 (MQGSVTEFLK…EQLDAFVELR (234 aa)) is alpha N-terminal domain (alpha-NTD). The alpha C-terminal domain (alpha-CTD) stretch occupies residues 248–329 (FDPILLRPVD…WPPASLADDL (82 aa)).

It belongs to the RNA polymerase alpha chain family. In terms of assembly, homodimer. The RNAP catalytic core consists of 2 alpha, 1 beta, 1 beta' and 1 omega subunit. When a sigma factor is associated with the core the holoenzyme is formed, which can initiate transcription.

The catalysed reaction is RNA(n) + a ribonucleoside 5'-triphosphate = RNA(n+1) + diphosphate. DNA-dependent RNA polymerase catalyzes the transcription of DNA into RNA using the four ribonucleoside triphosphates as substrates. The polypeptide is DNA-directed RNA polymerase subunit alpha (Shewanella putrefaciens (strain CN-32 / ATCC BAA-453)).